We begin with the raw amino-acid sequence, 494 residues long: Amidophosphoribosyltransferase (494 aa).

A propeptide spanning residues 1 to 10 is cleaved from the precursor; the sequence is MFNYSGLNEE. C11 acts as the Nucleophile in catalysis. The Glutamine amidotransferase type-2 domain maps to 11 to 231; it reads CGVFGIWNHP…AGEYVVINDK (221 aa). Positions 294, 356, and 357 each coordinate Mg(2+).

In the C-terminal section; belongs to the purine/pyrimidine phosphoribosyltransferase family. Mg(2+) serves as cofactor.

It catalyses the reaction 5-phospho-beta-D-ribosylamine + L-glutamate + diphosphate = 5-phospho-alpha-D-ribose 1-diphosphate + L-glutamine + H2O. The protein operates within purine metabolism; IMP biosynthesis via de novo pathway; N(1)-(5-phospho-D-ribosyl)glycinamide from 5-phospho-alpha-D-ribose 1-diphosphate: step 1/2. Its function is as follows. Catalyzes the formation of phosphoribosylamine from phosphoribosylpyrophosphate (PRPP) and glutamine. This chain is Amidophosphoribosyltransferase, found in Staphylococcus aureus (strain MRSA252).